The sequence spans 306 residues: Ribosomal RNA small subunit methyltransferase H (306 aa).

Residues 36 to 38, aspartate 56, phenylalanine 80, aspartate 97, and glutamine 104 contribute to the S-adenosyl-L-methionine site; that span reads GGH. The tract at residues 280–306 is disordered; that stretch reads ASEEEVAGNPRSRSAVMRVAERTGEAA.

The protein belongs to the methyltransferase superfamily. RsmH family.

It is found in the cytoplasm. The catalysed reaction is cytidine(1402) in 16S rRNA + S-adenosyl-L-methionine = N(4)-methylcytidine(1402) in 16S rRNA + S-adenosyl-L-homocysteine + H(+). Functionally, specifically methylates the N4 position of cytidine in position 1402 (C1402) of 16S rRNA. This is Ribosomal RNA small subunit methyltransferase H from Polaromonas naphthalenivorans (strain CJ2).